An 85-amino-acid polypeptide reads, in one-letter code: Large ribosomal subunit protein bL27 (85 aa).

Positions 1–22 (MAHKKAGGSTRNGRDSESKRLG) are disordered.

This sequence belongs to the bacterial ribosomal protein bL27 family.

The sequence is that of Large ribosomal subunit protein bL27 from Vibrio parahaemolyticus serotype O3:K6 (strain RIMD 2210633).